Here is a 215-residue protein sequence, read N- to C-terminus: Large ribosomal subunit protein uL4 (215 aa).

Positions R43 to S97 are disordered.

This sequence belongs to the universal ribosomal protein uL4 family. As to quaternary structure, part of the 50S ribosomal subunit.

Its function is as follows. One of the primary rRNA binding proteins, this protein initially binds near the 5'-end of the 23S rRNA. It is important during the early stages of 50S assembly. It makes multiple contacts with different domains of the 23S rRNA in the assembled 50S subunit and ribosome. In terms of biological role, forms part of the polypeptide exit tunnel. The protein is Large ribosomal subunit protein uL4 of Brachyspira pilosicoli (Serpulina pilosicoli).